Here is a 525-residue protein sequence, read N- to C-terminus: GMP synthase [glutamine-hydrolyzing] (525 aa).

The Glutamine amidotransferase type-1 domain occupies 9-207 (RILILDFGSQ…VQDICGCEAL (199 aa)). The active-site Nucleophile is the Cys86. Active-site residues include His181 and Glu183. Residues 208 to 400 (WTASNIVEDA…LGLPYDMVYR (193 aa)) form the GMPS ATP-PPase domain. Position 235-241 (235-241 (SGGVDSS)) interacts with ATP.

As to quaternary structure, homodimer.

It carries out the reaction XMP + L-glutamine + ATP + H2O = GMP + L-glutamate + AMP + diphosphate + 2 H(+). It functions in the pathway purine metabolism; GMP biosynthesis; GMP from XMP (L-Gln route): step 1/1. Catalyzes the synthesis of GMP from XMP. This chain is GMP synthase [glutamine-hydrolyzing], found in Pseudomonas putida (strain GB-1).